The following is a 280-amino-acid chain: Pantothenate synthetase (280 aa).

31-38 (MGNLHVGH) contacts ATP. His-38 (proton donor) is an active-site residue. Residue Gln-62 participates in (R)-pantoate binding. Position 62 (Gln-62) interacts with beta-alanine. 150–153 (GKKD) is a binding site for ATP. Gln-156 is a binding site for (R)-pantoate. ATP contacts are provided by residues Val-179 and 187–190 (MSSR).

Belongs to the pantothenate synthetase family. In terms of assembly, homodimer.

It localises to the cytoplasm. The enzyme catalyses (R)-pantoate + beta-alanine + ATP = (R)-pantothenate + AMP + diphosphate + H(+). It functions in the pathway cofactor biosynthesis; (R)-pantothenate biosynthesis; (R)-pantothenate from (R)-pantoate and beta-alanine: step 1/1. Functionally, catalyzes the condensation of pantoate with beta-alanine in an ATP-dependent reaction via a pantoyl-adenylate intermediate. The sequence is that of Pantothenate synthetase from Xanthomonas oryzae pv. oryzae (strain MAFF 311018).